The following is a 461-amino-acid chain: 3-isopropylmalate dehydratase large subunit (461 aa).

Residues Cys338, Cys398, and Cys401 each contribute to the [4Fe-4S] cluster site.

This sequence belongs to the aconitase/IPM isomerase family. LeuC type 1 subfamily. In terms of assembly, heterodimer of LeuC and LeuD. [4Fe-4S] cluster serves as cofactor.

The catalysed reaction is (2R,3S)-3-isopropylmalate = (2S)-2-isopropylmalate. It functions in the pathway amino-acid biosynthesis; L-leucine biosynthesis; L-leucine from 3-methyl-2-oxobutanoate: step 2/4. In terms of biological role, catalyzes the isomerization between 2-isopropylmalate and 3-isopropylmalate, via the formation of 2-isopropylmaleate. This is 3-isopropylmalate dehydratase large subunit from Streptococcus mutans serotype c (strain ATCC 700610 / UA159).